The sequence spans 131 residues: L-ectoine synthase (131 aa).

The protein belongs to the ectoine synthase family.

The catalysed reaction is (2S)-4-acetamido-2-aminobutanoate = L-ectoine + H2O. It participates in amine and polyamine biosynthesis; ectoine biosynthesis; L-ectoine from L-aspartate 4-semialdehyde: step 3/3. Catalyzes the circularization of gamma-N-acetyl-alpha,gamma-diaminobutyric acid (ADABA) to ectoine (1,4,5,6-tetrahydro-2-methyl-4-pyrimidine carboxylic acid), which is an excellent osmoprotectant. The chain is L-ectoine synthase from Wolinella succinogenes (strain ATCC 29543 / DSM 1740 / CCUG 13145 / JCM 31913 / LMG 7466 / NCTC 11488 / FDC 602W) (Vibrio succinogenes).